Consider the following 450-residue polypeptide: tRNA-aminoacylation cofactor arc1 (450 aa).

Residues 208-278 (QRPSVIKKDK…KEPPKAATPV (71 aa)) form a disordered region. Composition is skewed to basic and acidic residues over residues 213-225 (IKKDKKEKKEGKP) and 233-247 (SVEKAPKGLEGAKKE). Over residues 248-261 (KQNKKEKKDKKDKK) the composition is skewed to basic residues. Residues 262 to 272 (DKKEKAPKEPP) show a composition bias toward basic and acidic residues. In terms of domain architecture, tRNA-binding spans 278-382 (VPSMIDFRIG…ENAEIGDRLT (105 aa)).

It belongs to the tRNA-aminoacylation cofactor ARC1 family. In terms of assembly, component of a yeast aminoacyl-tRNA synthase (aaRS) complex formed by methionyl-tRNA synthase, glutamyl-tRNA synthase and the tRNA aminoacylation cofactor arc1 in a stoichiometric complex. Interacts with rar1/mes1 and gus1.

Its subcellular location is the cytoplasm. In terms of biological role, binds to tRNA and functions as a cofactor for the methionyl-tRNA synthetase (MetRS) and glutamyl-tRNA synthetase (GluRS). Forms a complex with MetRS and GluRS and increases their affinity for cognate tRNAs due to the presence of a tRNA binding domain in its middle and C-terminal part. This chain is tRNA-aminoacylation cofactor arc1, found in Schizosaccharomyces pombe (strain 972 / ATCC 24843) (Fission yeast).